Reading from the N-terminus, the 210-residue chain is uncharacterized protein (210 aa).

Phosphoserine is present on residues serine 18, serine 39, serine 41, serine 57, and serine 60. The span at leucine 33–alanine 46 shows a compositional bias: polar residues. The disordered stretch occupies residues leucine 33 to glycine 58. 2 disordered regions span residues tyrosine 100–serine 139 and aspartate 177–threonine 210. Polar residues predominate over residues histidine 102–methionine 116. Residues asparagine 130–serine 139 show a composition bias toward basic and acidic residues. 3 positions are modified to phosphoserine: serine 178, serine 189, and serine 192. A compositionally biased stretch (polar residues) spans histidine 191–threonine 210.

This is an uncharacterized protein from Saccharomyces cerevisiae (strain ATCC 204508 / S288c) (Baker's yeast).